Here is a 153-residue protein sequence, read N- to C-terminus: Protein SREK1IP1 (153 aa).

The CCHC-type zinc-finger motif lies at 13–30; that stretch reads AGCRKCGYPGHLTFECRN. A disordered region spans residues 44-153; sequence VSSTSSEDSD…SPNRSEVTKK (110 aa). Ser52 carries the phosphoserine modification. The segment covering 66-84 has biased composition (basic and acidic residues); it reads QEKRINEEEEKKKEKSREK. Positions 85 to 94 are enriched in basic residues; sequence IKLKKKRKRS. 2 positions are modified to phosphoserine: Ser96 and Ser97. Positions 106–141 are enriched in basic residues; it reads QKKQKYQKKEKKKEKKNKSKKGKHHKKEKKKRKKEK.

As to quaternary structure, interacts with SREK1/SFRS12.

Possible splicing regulator involved in the control of cellular survival. The sequence is that of Protein SREK1IP1 (Srek1ip1) from Rattus norvegicus (Rat).